The chain runs to 1041 residues: MDWLLFRNICLLILFMVVLGVNSEFIVEVKELDIENGTTTWQTVRRQKREWIKFAAACREGEDNSKRNPIARIRSDCEVSQRITYRISGAGIDRPPYGVFTINPRTGEINITSVVDREITPLFLIHCRALNSRGEDLERPLELRVKVMDVNDNPPVFTQNVYTANIEENSDANALVVKLSATDADEDNHLNSKIAYKIISQEPAGAPMFMVNRYTGEVRTMSNFLDREQHSMYNLLVRGSDRDGATDGLSSECDCRIKILDVNDNFPILEKTSYSASIEENCLSSELIRLQAIDLDEEGTDNWLAQYSILSGNDGNWFEIQTDPKTNEGILKVVKMLDYEQEPNIYLSIGVRNQAEFHHSVASQFQMHSTPVRIQVVNVREGPTFSPSSMTFSLRGGMRGASLMNYVLGTYTAIDMDTGNPATNVRYVIGHDAGSWLKVDSRTGEIQFSREFDMKSKYITDGIYAAQILAIDDGSGRTATGTICIEIPDANDYCPVIYAESRSVCTHASSVRIYVNDHSFGSPFTFCVVDESPDIANIWDIRSINGTSAILMTEQTLSPGPYQIPILVKDSHNRACELPQTVLLDACFCDDHHVCLHSSTTGIYTGDITWVTDDMYGTVTDDGVRQSNVGLGPAGIGMIILGLLLLLLSPLLLLMCCCKRRQPEGLGTRFAPVPEGGEGVMQPWRIEGAHPEDRDVSNICVPMTASNTQDRIDSSEIYTNTYAGGGTVEGGVSGVELNTGVGTATGMVAAGATGTLRKRSSTIGTLREYQDTGMNMAFLDSYFSEKAYAYADEDEGRPANDCLLIYDHEGAGSPVGSIGCCSWIVDDLDESYIETLDPKFRTLAEICLDTEIEPFPSHQACIPISTDLPLLGPNYFVNESSGMTLSEAEFQAEMAAASEPMIHGDIIVTETYTTSDPCVQPTTIVFDSQIPPNVVVTETVMAPVYDVQGNICVPAEIANTHNVYYAERVVASPGIPDMGNSNISDACIGPVMSGGILVGPEIQVTQMMSPDIHISQTTGSTSPMTSQHRVTRYSNMHYSRQ.

Positions 1-23 (MDWLLFRNICLLILFMVVLGVNS) are cleaved as a signal peptide. The propeptide occupies 24–49 (EFIVEVKELDIENGTTTWQTVRRQKR). Cadherin domains follow at residues 50–157 (EWIK…PPVF), 158–269 (TQNV…FPIL), 270–385 (EKTS…GPTF), and 389–497 (SMTF…CPVI). Residues 50–634 (EWIKFAAACR…RQSNVGLGPA (585 aa)) lie on the Extracellular side of the membrane. Asparagine 110 is a glycosylation site (N-linked (GlcNAc...) asparagine). Residue asparagine 545 is glycosylated (N-linked (GlcNAc...) asparagine). The chain crosses the membrane as a helical span at residues 635 to 655 (GIGMIILGLLLLLLSPLLLLM). Residues 656–1041 (CCCKRRQPEG…RYSNMHYSRQ (386 aa)) are Cytoplasmic-facing. Desmoglein repeat repeat units follow at residues 884 to 910 (TLSE…IVTE) and 911 to 941 (TYTT…ETVM). Positions 1014–1041 (ISQTTGSTSPMTSQHRVTRYSNMHYSRQ) are disordered.

Interacts with JUP. In terms of tissue distribution, strongly expressed in the skin; during the anagen stage of hair follicles in the matrix, precortex and inner rooth sheath.

It is found in the cell membrane. Its subcellular location is the cell junction. The protein localises to the desmosome. Its function is as follows. A component of desmosome cell-cell junctions which are required for positive regulation of cellular adhesion. Coordinates the transition from proliferation to differentiation in hair follicle keratinocytes. Plays a role in moderating lymphocyte migration to inflamed skin and maintaining homeostasis of the epidermal inflammatory response. This is Desmoglein-4 (Dsg4) from Mus musculus (Mouse).